The chain runs to 264 residues: Small ribosomal subunit protein uS3 (264 aa).

One can recognise a KH type-2 domain in the interval 39–107 (VRDFLKKKLK…PVHVNIEEIR (69 aa)). Positions 211-264 (NDAPVVEEPQDDRRRRPGRPEGRRREGEGRPGGNRRGGAGAGRRAAPGDAKSGE) are disordered. Over residues 221–239 (DDRRRRPGRPEGRRREGEG) the composition is skewed to basic and acidic residues. Over residues 240-251 (RPGGNRRGGAGA) the composition is skewed to gly residues.

This sequence belongs to the universal ribosomal protein uS3 family. In terms of assembly, part of the 30S ribosomal subunit. Forms a tight complex with proteins S10 and S14.

In terms of biological role, binds the lower part of the 30S subunit head. Binds mRNA in the 70S ribosome, positioning it for translation. In Cupriavidus pinatubonensis (strain JMP 134 / LMG 1197) (Cupriavidus necator (strain JMP 134)), this protein is Small ribosomal subunit protein uS3.